Reading from the N-terminus, the 424-residue chain is Deoxyguanosinetriphosphate triphosphohydrolase-like protein (424 aa).

The disordered stretch occupies residues 1-24 (MYPYSDADAFRRHPERAKSSQLRT). A compositionally biased stretch (basic and acidic residues) spans 8-18 (DAFRRHPERAK). The HD domain maps to 67–217 (RLTHSLEVAQ…MDFSDDIAYS (151 aa)).

It belongs to the dGTPase family. Type 2 subfamily.

This is Deoxyguanosinetriphosphate triphosphohydrolase-like protein from Corynebacterium glutamicum (strain R).